A 160-amino-acid polypeptide reads, in one-letter code: Ribosomal RNA large subunit methyltransferase H (160 aa).

S-adenosyl-L-methionine contacts are provided by residues Leu76, Gly108, and 127–132; that span reads LGKMTW.

Belongs to the RNA methyltransferase RlmH family. Homodimer.

It is found in the cytoplasm. It carries out the reaction pseudouridine(1915) in 23S rRNA + S-adenosyl-L-methionine = N(3)-methylpseudouridine(1915) in 23S rRNA + S-adenosyl-L-homocysteine + H(+). Functionally, specifically methylates the pseudouridine at position 1915 (m3Psi1915) in 23S rRNA. This chain is Ribosomal RNA large subunit methyltransferase H, found in Rhizobium rhizogenes (strain K84 / ATCC BAA-868) (Agrobacterium radiobacter).